A 113-amino-acid chain; its full sequence is Dolichyl-diphosphooligosaccharide--protein glycosyltransferase subunit DAD1 (113 aa).

An N-acetylserine modification is found at serine 2. Residues 2–30 lie on the Cytoplasmic side of the membrane; sequence SASVVSVISRFLEEYLSSTPQRLKLLDAY. The helical transmembrane segment at 31 to 51 threads the bilayer; it reads LLYILLTGALQFGYCLLVGTF. Position 52 (proline 52) is a topological domain, lumenal. The chain crosses the membrane as a helical span at residues 53–73; that stretch reads FNSFLSGFISCVGSFILAVCL. Topologically, residues 74–92 are cytoplasmic; that stretch reads RIQINPQNKADFQGISPER. Residues 93–113 traverse the membrane as a helical segment; it reads AFADFLFASTILHLVVMNFVG.

This sequence belongs to the DAD/OST2 family. In terms of assembly, component of the oligosaccharyltransferase (OST) complex. OST exists in two different complex forms which contain common core subunits RPN1, RPN2, OST48, OST4, DAD1 and TMEM258, either STT3A or STT3B as catalytic subunits, and form-specific accessory subunits. STT3A complex assembly occurs through the formation of 3 subcomplexes. Subcomplex 1 contains RPN1 and TMEM258, subcomplex 2 contains the STT3A-specific subunits STT3A, DC2/OSTC, and KCP2 as well as the core subunit OST4, and subcomplex 3 contains RPN2, DAD1, and OST48. The STT3A complex can form stable complexes with the Sec61 complex or with both the Sec61 and TRAP complexes.

It localises to the endoplasmic reticulum membrane. The protein operates within protein modification; protein glycosylation. Subunit of the oligosaccharyl transferase (OST) complex that catalyzes the initial transfer of a defined glycan (Glc(3)Man(9)GlcNAc(2) in eukaryotes) from the lipid carrier dolichol-pyrophosphate to an asparagine residue within an Asn-X-Ser/Thr consensus motif in nascent polypeptide chains, the first step in protein N-glycosylation. N-glycosylation occurs cotranslationally and the complex associates with the Sec61 complex at the channel-forming translocon complex that mediates protein translocation across the endoplasmic reticulum (ER). All subunits are required for a maximal enzyme activity. This is Dolichyl-diphosphooligosaccharide--protein glycosyltransferase subunit DAD1 from Mus musculus (Mouse).